The following is a 530-amino-acid chain: Autoinducer-2 kinase (530 aa).

It belongs to the FGGY kinase family.

Its subcellular location is the cytoplasm. It catalyses the reaction (S)-4,5-dihydroxypentane-2,3-dione + ATP = (2S)-2-hydroxy-3,4-dioxopentyl phosphate + ADP + H(+). Functionally, catalyzes the phosphorylation of autoinducer-2 (AI-2) to phospho-AI-2, which subsequently inactivates the transcriptional regulator LsrR and leads to the transcription of the lsr operon. Phosphorylates the ring-open form of (S)-4,5-dihydroxypentane-2,3-dione (DPD), which is the precursor to all AI-2 signaling molecules, at the C5 position. In Yersinia pseudotuberculosis serotype O:1b (strain IP 31758), this protein is Autoinducer-2 kinase.